The chain runs to 369 residues: Coiled-coil domain-containing protein 130 homolog (369 aa).

The segment covering Thr-233–Glu-263 has biased composition (basic and acidic residues). A disordered region spans residues Thr-233–Asp-369. The span at Thr-266–Ser-282 shows a compositional bias: low complexity. The segment covering Glu-283–Ile-297 has biased composition (basic and acidic residues). The span at Ala-299–Thr-310 shows a compositional bias: low complexity.

This sequence belongs to the CWC16 family.

This Caenorhabditis elegans protein is Coiled-coil domain-containing protein 130 homolog.